The chain runs to 812 residues: DNA gyrase subunit A (812 aa).

The Topo IIA-type catalytic domain maps to 31-496 (IPDVRDGLKP…GNTDFNVEDV (466 aa)). Tyr-119 acts as the O-(5'-phospho-DNA)-tyrosine intermediate in catalysis. Positions 523-529 (QGRGGKG) match the GyrA-box motif.

Belongs to the type II topoisomerase GyrA/ParC subunit family. In terms of assembly, heterotetramer, composed of two GyrA and two GyrB chains. In the heterotetramer, GyrA contains the active site tyrosine that forms a transient covalent intermediate with DNA, while GyrB binds cofactors and catalyzes ATP hydrolysis.

Its subcellular location is the cytoplasm. It catalyses the reaction ATP-dependent breakage, passage and rejoining of double-stranded DNA.. In terms of biological role, a type II topoisomerase that negatively supercoils closed circular double-stranded (ds) DNA in an ATP-dependent manner to modulate DNA topology and maintain chromosomes in an underwound state. Negative supercoiling favors strand separation, and DNA replication, transcription, recombination and repair, all of which involve strand separation. Also able to catalyze the interconversion of other topological isomers of dsDNA rings, including catenanes and knotted rings. Type II topoisomerases break and join 2 DNA strands simultaneously in an ATP-dependent manner. The chain is DNA gyrase subunit A from Kosmotoga olearia (strain ATCC BAA-1733 / DSM 21960 / TBF 19.5.1).